A 432-amino-acid chain; its full sequence is Septin-14 (432 aa).

In terms of domain architecture, Septin-type G spans 49 to 315 (QGFTFNILCV…ECYRYQKLQK (267 aa)). A G1 motif region spans residues 59 to 66 (GETGIGKS). Residues 59–66 (GETGIGKS), G114, 195–203 (KADTISKND), G249, and R264 contribute to the GTP site. The segment at 111 to 114 (ETVG) is G3 motif. Residues 194 to 197 (AKAD) are G4 motif. Positions 332–412 (EIFEAKRQEF…IIDFYKMKAA (81 aa)) form a coiled coil. The required for interaction with SEPTIN4. Required for migration of cortical neurons during corticogenesis stretch occupies residues 369 to 432 (EAEKELQDKF…DTKKDKHRKK (64 aa)).

Belongs to the TRAFAC class TrmE-Era-EngA-EngB-Septin-like GTPase superfamily. Septin GTPase family. Septins polymerize into heterooligomeric protein complexes that form filaments, and can associate with cellular membranes, actin filaments and microtubules. GTPase activity is required for filament formation. Interacts with ACTN4. Interacts with SEPTIN9. Interacts (via C-terminus) with SEPTIN4. In terms of tissue distribution, testis-specific (at protein level).

It is found in the cytoplasm. The protein localises to the cytoskeleton. Its subcellular location is the cell projection. The protein resides in the axon. It localises to the dendrite. It is found in the perikaryon. The protein localises to the perinuclear region. Its subcellular location is the cytoplasmic vesicle. The protein resides in the secretory vesicle. It localises to the acrosome. Functionally, filament-forming cytoskeletal GTPase. Involved in the migration of cortical neurons and the formation of neuron leading processes during embryonic development. Plays a role in sperm head formation during spermiogenesis, potentially via facilitating localization of ACTN4 to cell filaments. The sequence is that of Septin-14 from Homo sapiens (Human).